A 452-amino-acid chain; its full sequence is UDP-N-acetylmuramoylalanine--D-glutamate ligase (452 aa).

115-121 (GTNGKTT) is a binding site for ATP.

It belongs to the MurCDEF family.

The protein resides in the cytoplasm. The enzyme catalyses UDP-N-acetyl-alpha-D-muramoyl-L-alanine + D-glutamate + ATP = UDP-N-acetyl-alpha-D-muramoyl-L-alanyl-D-glutamate + ADP + phosphate + H(+). The protein operates within cell wall biogenesis; peptidoglycan biosynthesis. In terms of biological role, cell wall formation. Catalyzes the addition of glutamate to the nucleotide precursor UDP-N-acetylmuramoyl-L-alanine (UMA). The sequence is that of UDP-N-acetylmuramoylalanine--D-glutamate ligase from Elusimicrobium minutum (strain Pei191).